A 472-amino-acid chain; its full sequence is Adenosylhomocysteinase (472 aa).

Residues Thr-64, Asp-138, and Glu-198 each coordinate substrate. 199 to 201 (TTT) is a binding site for NAD(+). Residues Lys-228 and Asp-232 each contribute to the substrate site. NAD(+) is bound by residues Asn-233, 262–267 (GFGDVG), Glu-285, Asn-320, 341–343 (IGH), and Asn-386.

It belongs to the adenosylhomocysteinase family. Requires NAD(+) as cofactor.

The protein resides in the cytoplasm. It carries out the reaction S-adenosyl-L-homocysteine + H2O = L-homocysteine + adenosine. Its pathway is amino-acid biosynthesis; L-homocysteine biosynthesis; L-homocysteine from S-adenosyl-L-homocysteine: step 1/1. In terms of biological role, may play a key role in the regulation of the intracellular concentration of adenosylhomocysteine. This is Adenosylhomocysteinase from Prochlorococcus marinus (strain MIT 9215).